We begin with the raw amino-acid sequence, 424 residues long: Dihydroorotase (424 aa).

2 residues coordinate Zn(2+): His58 and His60. Substrate-binding positions include 60–62, Asn92, and Asn276; that span reads HLR. Asp303 lines the Zn(2+) pocket. Asp303 is an active-site residue. Residues His307 and 321 to 322 contribute to the substrate site; that span reads FG.

This sequence belongs to the metallo-dependent hydrolases superfamily. DHOase family. Class I DHOase subfamily. The cofactor is Zn(2+).

The enzyme catalyses (S)-dihydroorotate + H2O = N-carbamoyl-L-aspartate + H(+). Its pathway is pyrimidine metabolism; UMP biosynthesis via de novo pathway; (S)-dihydroorotate from bicarbonate: step 3/3. Functionally, catalyzes the reversible cyclization of carbamoyl aspartate to dihydroorotate. In Staphylococcus aureus (strain COL), this protein is Dihydroorotase.